Consider the following 132-residue polypeptide: L-ectoine synthase (132 aa).

This sequence belongs to the ectoine synthase family.

It carries out the reaction (2S)-4-acetamido-2-aminobutanoate = L-ectoine + H2O. The protein operates within amine and polyamine biosynthesis; ectoine biosynthesis; L-ectoine from L-aspartate 4-semialdehyde: step 3/3. Functionally, catalyzes the circularization of gamma-N-acetyl-alpha,gamma-diaminobutyric acid (ADABA) to ectoine (1,4,5,6-tetrahydro-2-methyl-4-pyrimidine carboxylic acid), which is an excellent osmoprotectant. This Alkalilimnicola ehrlichii (strain ATCC BAA-1101 / DSM 17681 / MLHE-1) protein is L-ectoine synthase.